The following is a 433-amino-acid chain: Enolase (433 aa).

Q167 provides a ligand contact to (2R)-2-phosphoglycerate. The Proton donor role is filled by E209. D246, E291, and D318 together coordinate Mg(2+). The (2R)-2-phosphoglycerate site is built by K343, R372, S373, and K394. Residue K343 is the Proton acceptor of the active site.

Belongs to the enolase family. In terms of assembly, component of the RNA degradosome, a multiprotein complex involved in RNA processing and mRNA degradation. Requires Mg(2+) as cofactor.

It is found in the cytoplasm. The protein localises to the secreted. The protein resides in the cell surface. The enzyme catalyses (2R)-2-phosphoglycerate = phosphoenolpyruvate + H2O. Its pathway is carbohydrate degradation; glycolysis; pyruvate from D-glyceraldehyde 3-phosphate: step 4/5. Functionally, catalyzes the reversible conversion of 2-phosphoglycerate (2-PG) into phosphoenolpyruvate (PEP). It is essential for the degradation of carbohydrates via glycolysis. The chain is Enolase from Sodalis glossinidius (strain morsitans).